A 913-amino-acid polypeptide reads, in one-letter code: Valine--tRNA ligase (913 aa).

Positions proline 49–histidine 59 match the 'HIGH' region motif. Residues lysine 544–serine 548 carry the 'KMSKS' region motif. Lysine 547 serves as a coordination point for ATP. Positions aspartate 851 to leucine 912 form a coiled coil.

It belongs to the class-I aminoacyl-tRNA synthetase family. ValS type 1 subfamily. As to quaternary structure, monomer.

The protein resides in the cytoplasm. The catalysed reaction is tRNA(Val) + L-valine + ATP = L-valyl-tRNA(Val) + AMP + diphosphate. Catalyzes the attachment of valine to tRNA(Val). As ValRS can inadvertently accommodate and process structurally similar amino acids such as threonine, to avoid such errors, it has a 'posttransfer' editing activity that hydrolyzes mischarged Thr-tRNA(Val) in a tRNA-dependent manner. This is Valine--tRNA ligase from Deinococcus radiodurans (strain ATCC 13939 / DSM 20539 / JCM 16871 / CCUG 27074 / LMG 4051 / NBRC 15346 / NCIMB 9279 / VKM B-1422 / R1).